The chain runs to 236 residues: Biosynthetic peptidoglycan transglycosylase (236 aa).

Residues 17–37 (IVILVALALLALPYLLTILYG) form a helical membrane-spanning segment.

It belongs to the glycosyltransferase 51 family.

It is found in the cell inner membrane. The enzyme catalyses [GlcNAc-(1-&gt;4)-Mur2Ac(oyl-L-Ala-gamma-D-Glu-L-Lys-D-Ala-D-Ala)](n)-di-trans,octa-cis-undecaprenyl diphosphate + beta-D-GlcNAc-(1-&gt;4)-Mur2Ac(oyl-L-Ala-gamma-D-Glu-L-Lys-D-Ala-D-Ala)-di-trans,octa-cis-undecaprenyl diphosphate = [GlcNAc-(1-&gt;4)-Mur2Ac(oyl-L-Ala-gamma-D-Glu-L-Lys-D-Ala-D-Ala)](n+1)-di-trans,octa-cis-undecaprenyl diphosphate + di-trans,octa-cis-undecaprenyl diphosphate + H(+). The protein operates within cell wall biogenesis; peptidoglycan biosynthesis. Its function is as follows. Peptidoglycan polymerase that catalyzes glycan chain elongation from lipid-linked precursors. In Rhodopseudomonas palustris (strain ATCC BAA-98 / CGA009), this protein is Biosynthetic peptidoglycan transglycosylase.